A 763-amino-acid chain; its full sequence is Elongation factor G, mitochondrial (763 aa).

A mitochondrion-targeting transit peptide spans 1-52; it reads MFMRLKVLEMNSIRRQTLLRQFTNVYNVVSRSARLCSQAIPKRLFYSTGSRA. Positions 60-347 constitute a tr-type G domain; the sequence is SRLRNIGISA…AVCDYLPNPS (288 aa). Residues 69–76, 145–149, and 199–202 each bind GTP; these read AHIDSGKT, DTPGH, and NKMD.

This sequence belongs to the TRAFAC class translation factor GTPase superfamily. Classic translation factor GTPase family. EF-G/EF-2 subfamily.

It is found in the mitochondrion. It participates in protein biosynthesis; polypeptide chain elongation. Its function is as follows. Mitochondrial GTPase that catalyzes the GTP-dependent ribosomal translocation step during translation elongation. During this step, the ribosome changes from the pre-translocational (PRE) to the post-translocational (POST) state as the newly formed A-site-bound peptidyl-tRNA and P-site-bound deacylated tRNA move to the P and E sites, respectively. Catalyzes the coordinated movement of the two tRNA molecules, the mRNA and conformational changes in the ribosome. The chain is Elongation factor G, mitochondrial (mef1) from Schizosaccharomyces japonicus (strain yFS275 / FY16936) (Fission yeast).